We begin with the raw amino-acid sequence, 78 residues long: UPF0335 protein RP113 (78 aa).

This sequence belongs to the UPF0335 family.

This is UPF0335 protein RP113 from Rickettsia prowazekii (strain Madrid E).